We begin with the raw amino-acid sequence, 203 residues long: Putative phosphoserine phosphatase 2 (203 aa).

Residue H9 is the Tele-phosphohistidine intermediate of the active site. Residue H149 is part of the active site.

It belongs to the histidine phosphatase superfamily. Metal-independent phosphoserine phosphatase family. As to quaternary structure, heterodimer with PspA. The PspB subunit appears to have no or considerably lower PSP activity compared with that of PspA.

It carries out the reaction O-phospho-L-serine + H2O = L-serine + phosphate. The enzyme catalyses O-phospho-D-serine + H2O = D-serine + phosphate. It functions in the pathway amino-acid biosynthesis; L-serine biosynthesis; L-serine from 3-phospho-D-glycerate: step 3/3. Its activity is regulated as follows. Activity is not inhibited by EDTA in vitro, nor enhanced by the addition of Mg(2+). Its function is as follows. Part of a complex that catalyzes the dephosphorylation of L-phosphoserine to serine and inorganic phosphate. Is poorly or not active toward D-phosphoserine, DL-phosphothreonine, 3-phosphoglycerate, para-nitrophenylphosphate, and fructose-6-phosphate. Does not display phosphoglycerate mutase activity. This Hydrogenobacter thermophilus (strain DSM 6534 / IAM 12695 / TK-6) protein is Putative phosphoserine phosphatase 2 (pspB).